A 217-amino-acid polypeptide reads, in one-letter code: Large ribosomal subunit protein uL3 (217 aa).

A disordered region spans residues 127–162 (GFSRGPMSHGSKNHRAPGSTGAGTTPGRIYPGKRMA). A compositionally biased stretch (low complexity) spans 142-153 (APGSTGAGTTPG).

Belongs to the universal ribosomal protein uL3 family. As to quaternary structure, part of the 50S ribosomal subunit. Forms a cluster with proteins L14 and L19.

One of the primary rRNA binding proteins, it binds directly near the 3'-end of the 23S rRNA, where it nucleates assembly of the 50S subunit. The chain is Large ribosomal subunit protein uL3 from Prochlorococcus marinus (strain AS9601).